The following is a 732-amino-acid chain: E3 ubiquitin-protein ligase TRIM56 (732 aa).

The RING-type zinc finger occupies 21–60; that stretch reads CKICLEQLRVPKTLPCLHTYCQDCLAQLAEGSRLRCPECR. Residues 164-205 form a B box-type zinc finger; that stretch reads RQAAQCPQHPGEALRFLCQPCSQLLCRECRLDPHLDHPCLPL. The Zn(2+) site is built by C169, H172, C192, and H197. Residues 211–286 are a coiled coil; the sequence is ARRPGLEELL…LRAHVEAAEE (76 aa). Basic and acidic residues predominate over residues 374 to 384; that stretch reads LPQKDSGKDGA. Positions 374–462 are disordered; the sequence is LPQKDSGKDG…PAPGPNLEGS (89 aa). Residues 389–405 show a composition bias toward polar residues; that stretch reads GDATQPQSRDGVQTPNQ. T402 is subject to Phosphothreonine. The span at 407 to 416 shows a compositional bias: basic and acidic residues; it reads DGAKTPKESR. Phosphothreonine is present on T419. Residues 434–446 show a composition bias toward basic residues; it reads SNKKRKFKGRLKS. S452 is subject to Phosphoserine.

It belongs to the TRIM/RBCC family. In terms of assembly, interacts with STING1. Interacts with TICAM1.

The protein resides in the cytoplasm. It catalyses the reaction S-ubiquitinyl-[E2 ubiquitin-conjugating enzyme]-L-cysteine + [acceptor protein]-L-lysine = [E2 ubiquitin-conjugating enzyme]-L-cysteine + N(6)-ubiquitinyl-[acceptor protein]-L-lysine.. It participates in protein modification; protein ubiquitination. Functionally, E3 ubiquitin-protein ligase that plays a key role in innate antiviral immunity by mediating ubiquitination of CGAS and STING1. In response to pathogen- and host-derived double-stranded DNA (dsDNA), targets STING1 to 'Lys-63'-linked ubiquitination, thereby promoting its homodimerization, a step required for the production of type I interferon IFN-beta. Also mediate monoubiquitination of CGAS, thereby promoting CGAS oligomerization and subsequent activation. Independently of its E3 ubiquitin ligase activity, positive regulator of TLR3 signaling. Potentiates extracellular double stranded RNA (dsRNA)-induced expression of IFNB1 and interferon-stimulated genes ISG15, IFIT1/ISG56, CXCL10, OASL and CCL5/RANTES. Restricts bovine viral diarrhea virus (BVDV) replication. This is E3 ubiquitin-protein ligase TRIM56 from Bos taurus (Bovine).